The sequence spans 676 residues: UvrABC system protein B (676 aa).

The Helicase ATP-binding domain maps to 39 to 424 (RGILDGIPSQ…RGHIIEQIIR (386 aa)). 52–59 (GTTGSGKT) contacts ATP. The Beta-hairpin motif lies at 105 to 128 (YYDYYQPEAYIARSDTYIEKSLLI). The region spanning 441-604 (QIDDLLEEIR…ITPKPIIKPI (164 aa)) is the Helicase C-terminal domain. A disordered region spans residues 611–631 (KEGAQEDSRPETQSTEDLESS). Residues 629 to 664 (ESSIKQYEEAMYKAAQDFQFDEAAKYRDLMNAAKRQ) enclose the UVR domain.

The protein belongs to the UvrB family. In terms of assembly, forms a heterotetramer with UvrA during the search for lesions. Interacts with UvrC in an incision complex.

Its subcellular location is the cytoplasm. Functionally, the UvrABC repair system catalyzes the recognition and processing of DNA lesions. A damage recognition complex composed of 2 UvrA and 2 UvrB subunits scans DNA for abnormalities. Upon binding of the UvrA(2)B(2) complex to a putative damaged site, the DNA wraps around one UvrB monomer. DNA wrap is dependent on ATP binding by UvrB and probably causes local melting of the DNA helix, facilitating insertion of UvrB beta-hairpin between the DNA strands. Then UvrB probes one DNA strand for the presence of a lesion. If a lesion is found the UvrA subunits dissociate and the UvrB-DNA preincision complex is formed. This complex is subsequently bound by UvrC and the second UvrB is released. If no lesion is found, the DNA wraps around the other UvrB subunit that will check the other stand for damage. This chain is UvrABC system protein B, found in Chlamydia muridarum (strain MoPn / Nigg).